Reading from the N-terminus, the 491-residue chain is Hydroxymethylglutaryl-CoA synthase (491 aa).

The active-site Proton donor/acceptor is Glu127. Cys159 acts as the Acyl-thioester intermediate in catalysis. 3 residues coordinate (3S)-3-hydroxy-3-methylglutaryl-CoA: Cys159, Thr201, and Ser250. At Ser276 the chain carries Phosphoserine. His296 functions as the Proton donor/acceptor in the catalytic mechanism. Residues His296, Lys305, Asn371, and Ser405 each coordinate (3S)-3-hydroxy-3-methylglutaryl-CoA.

The protein belongs to the thiolase-like superfamily. HMG-CoA synthase family.

The enzyme catalyses acetoacetyl-CoA + acetyl-CoA + H2O = (3S)-3-hydroxy-3-methylglutaryl-CoA + CoA + H(+). It participates in metabolic intermediate biosynthesis; (R)-mevalonate biosynthesis; (R)-mevalonate from acetyl-CoA: step 2/3. In terms of biological role, hydroxymethylglutaryl-CoA synthase; part of the first module of ergosterol biosynthesis pathway that includes the early steps of the pathway, conserved across all eukaryotes, and which results in the formation of mevalonate from acetyl-coenzyme A (acetyl-CoA). ERG13 condenses acetyl-CoA with acetoacetyl-CoA to form hydroxymethylglutaryl-CoA (HMG-CoA). The first module starts with the action of the cytosolic acetyl-CoA acetyltransferase ERG10 that catalyzes the formation of acetoacetyl-CoA. The hydroxymethylglutaryl-CoA synthase ERG13 then condenses acetyl-CoA with acetoacetyl-CoA to form HMG-CoA. The rate-limiting step of the early module is the reduction to mevalonate by the 3-hydroxy-3-methylglutaryl-coenzyme A (HMG-CoA) reductases HMG1 and HMG2 which are derived from a single ancestral HMGR gene by gene duplication. This is Hydroxymethylglutaryl-CoA synthase from Saccharomyces cerevisiae (strain ATCC 204508 / S288c) (Baker's yeast).